The primary structure comprises 1762 residues: Non-reducing polyketide synthase PKS8-1 (1762 aa).

The N-terminal acylcarrier protein transacylase domain (SAT) stretch occupies residues 17–247 (DIYRGLHNHS…ARYIELPVYG (231 aa)). The Ketosynthase family 3 (KS3) domain occupies 385–819 (QSKLAITGIS…GGNTTMVLEE (435 aa)). Catalysis depends on for beta-ketoacyl synthase activity residues Cys-558, His-694, and His-737. The tract at residues 920-1240 (FSFTGQGASH…MAALHLTGVA (321 aa)) is malonyl-CoA:ACP transacylase (MAT) domain. A product template (PT) domain region spans residues 1308 to 1622 (TSTVQQVIAL…PRILLNRFFS (315 aa)). The segment at 1312–1448 (QQVIALEVEG…GDANDWLSSW (137 aa)) is N-terminal hotdog fold. Residues 1312–1618 (QQVIALEVEG…FRSYPRILLN (307 aa)) enclose the PKS/mFAS DH domain. His-1344 (proton acceptor; for dehydratase activity) is an active-site residue. The C-terminal hotdog fold stretch occupies residues 1471–1618 (ASRFTRNMAY…FRSYPRILLN (148 aa)). The active-site Proton donor; for dehydratase activity is Asp-1529. Residues 1632 to 1689 (RAGNAATVTPQVTIPKPPSSLKTPAPANPSRRDSGVESKPLPPPQPKQAPPSTDSENS) are disordered. Over residues 1671-1680 (PLPPPQPKQA) the composition is skewed to pro residues. The Carrier domain occupies 1685–1762 (DSENSTISKA…DMRRWLEEHY (78 aa)). Ser-1722 is modified (O-(pantetheine 4'-phosphoryl)serine).

The enzyme catalyses holo-[ACP] + 8 malonyl-CoA + 8 H(+) = atrochrysone carboxyl-[ACP] + 8 CO2 + 8 CoA + 2 H2O. The protein operates within secondary metabolite biosynthesis. Non-reducing polyketide synthase; part of the gene cluster that mediates the biosynthesis of an emodin derivative that may be involved in black Sigatoka disease of banana. The pathway begins with the synthesis of atrochrysone thioester by the polyketide synthase PKS8-1. The atrochrysone carboxyl ACP thioesterase MYCFIDRAFT_190111 then breaks the thioester bond and releases the atrochrysone carboxylic acid from PKS8-1. The decarboxylase MYCFIDRAFT_34057 then catalyzes the concerted decarboxylation-elimination required to convert atochrysone carboxylic acid into emodin anthrone, which is further oxidized to emodin by the anthrone oxygenase MYCFIDRAFT_34418. The functions of the other tailoring enzymes as well as the final product of the cluster have still to be identified. The polypeptide is Non-reducing polyketide synthase PKS8-1 (PKS8-1) (Pseudocercospora fijiensis (strain CIRAD86) (Black leaf streak disease fungus)).